The following is a 355-amino-acid chain: Methionine import ATP-binding protein MetN (355 aa).

In terms of domain architecture, ABC transporter spans Leu-8–Ile-250. Gly-42–Ser-49 lines the ATP pocket.

The protein belongs to the ABC transporter superfamily. Methionine importer (TC 3.A.1.24) family. In terms of assembly, the complex is composed of two ATP-binding proteins (MetN), two transmembrane proteins (MetI) and a solute-binding protein (MetQ).

Its subcellular location is the cell membrane. The enzyme catalyses L-methionine(out) + ATP + H2O = L-methionine(in) + ADP + phosphate + H(+). The catalysed reaction is D-methionine(out) + ATP + H2O = D-methionine(in) + ADP + phosphate + H(+). Its function is as follows. Part of the ABC transporter complex MetNIQ involved in methionine import. Responsible for energy coupling to the transport system. This chain is Methionine import ATP-binding protein MetN, found in Streptococcus thermophilus (strain ATCC BAA-250 / LMG 18311).